Reading from the N-terminus, the 35-residue chain is Small toxic polypeptide LdrA (35 aa).

Residues 8 to 28 traverse the membrane as a helical segment; it reads MIFWHDLAAPILAGIITAAIV.

It belongs to the Ldr toxic peptide family.

The protein resides in the cell inner membrane. Its function is as follows. Toxic component of a type I toxin-antitoxin (TA) system. Inhibits ATP synthesis possibly due to its insertion in the cell inner membrane, ATP levels drop over 50% 2 minutes after induction. Overexpression is toxic leading to cell death, it inhibits cell growth within 30 minutes; C-terminally tagged versions of the protein are toxic while N-terminally tagged versions are not. The polypeptide is Small toxic polypeptide LdrA (ldrA) (Escherichia coli (strain K12)).